Reading from the N-terminus, the 290-residue chain is MFLLELIKGIILGIVEGLTEFAPVSSTGHMILVDDMWLKSTNFLGSQSAFTFKVVIQLGSVFAAAWVFRERFLEILHIGQHKPEPSTSGDRRSKPRRLNLIHVLVGMVPAGILGFLFDDLIEKYLFSVPTVLIGLFIGAIYMIIADKYSKTVQHPQTVDQINYFQAFVIGISQAIAMWPGFSRSGSTISTGVLMKLNHKAASDFTFIMSVPIMLAASGLSLLKHYEYIHLAHIPFYILGFLAAFIVGLIAIKTFLHLINKVKLVPFAIYRIVLVIFIAILYFGFGIGKGI.

Transmembrane regions (helical) follow at residues 1–21 (MFLL…LTEF), 48–68 (SAFT…AWVF), 101–121 (IHVL…DDLI), 125–145 (LFSV…MIIA), 161–181 (INYF…WPGF), 202–222 (SDFT…LSLL), 231–251 (AHIP…LIAI), and 266–286 (FAIY…GFGI).

The protein belongs to the UppP family.

It localises to the cell membrane. It carries out the reaction di-trans,octa-cis-undecaprenyl diphosphate + H2O = di-trans,octa-cis-undecaprenyl phosphate + phosphate + H(+). In terms of biological role, catalyzes the dephosphorylation of undecaprenyl diphosphate (UPP). Confers resistance to bacitracin. This is Undecaprenyl-diphosphatase from Staphylococcus epidermidis (strain ATCC 35984 / DSM 28319 / BCRC 17069 / CCUG 31568 / BM 3577 / RP62A).